A 527-amino-acid chain; its full sequence is Bifunctional purine biosynthesis protein PurH (527 aa).

Positions 9 to 156 constitute an MGS-like domain; the sequence is MARKPIRRAL…KNHPSVAVVT (148 aa).

The protein belongs to the PurH family.

The enzyme catalyses (6R)-10-formyltetrahydrofolate + 5-amino-1-(5-phospho-beta-D-ribosyl)imidazole-4-carboxamide = 5-formamido-1-(5-phospho-D-ribosyl)imidazole-4-carboxamide + (6S)-5,6,7,8-tetrahydrofolate. It catalyses the reaction IMP + H2O = 5-formamido-1-(5-phospho-D-ribosyl)imidazole-4-carboxamide. It participates in purine metabolism; IMP biosynthesis via de novo pathway; 5-formamido-1-(5-phospho-D-ribosyl)imidazole-4-carboxamide from 5-amino-1-(5-phospho-D-ribosyl)imidazole-4-carboxamide (10-formyl THF route): step 1/1. It functions in the pathway purine metabolism; IMP biosynthesis via de novo pathway; IMP from 5-formamido-1-(5-phospho-D-ribosyl)imidazole-4-carboxamide: step 1/1. The chain is Bifunctional purine biosynthesis protein PurH from Mycobacterium leprae (strain Br4923).